Consider the following 392-residue polypeptide: Succinate--CoA ligase [ADP-forming] subunit beta (392 aa).

The region spanning 9-248 (KDILRKFGVA…TNEEDPFEVE (240 aa)) is the ATP-grasp domain. ATP-binding positions include Lys-50, 57–59 (GRG), Glu-103, Met-106, and Glu-111. Mg(2+)-binding residues include Asn-203 and Asp-217. Residues Asn-268 and 325–327 (GIV) each bind substrate.

Belongs to the succinate/malate CoA ligase beta subunit family. In terms of assembly, heterotetramer of two alpha and two beta subunits. Requires Mg(2+) as cofactor.

It catalyses the reaction succinate + ATP + CoA = succinyl-CoA + ADP + phosphate. The catalysed reaction is GTP + succinate + CoA = succinyl-CoA + GDP + phosphate. Its pathway is carbohydrate metabolism; tricarboxylic acid cycle; succinate from succinyl-CoA (ligase route): step 1/1. Succinyl-CoA synthetase functions in the citric acid cycle (TCA), coupling the hydrolysis of succinyl-CoA to the synthesis of either ATP or GTP and thus represents the only step of substrate-level phosphorylation in the TCA. The beta subunit provides nucleotide specificity of the enzyme and binds the substrate succinate, while the binding sites for coenzyme A and phosphate are found in the alpha subunit. The sequence is that of Succinate--CoA ligase [ADP-forming] subunit beta from Pelodictyon phaeoclathratiforme (strain DSM 5477 / BU-1).